The sequence spans 359 residues: Dual-specificity RNA methyltransferase RlmN 1 (359 aa).

Glutamate 96 acts as the Proton acceptor in catalysis. The Radical SAM core domain occupies phenylalanine 102 to aspartate 335. Cysteine 109 and cysteine 340 form a disulfide bridge. Residues cysteine 116, cysteine 120, and cysteine 123 each coordinate [4Fe-4S] cluster. Residues glycine 166 to glutamate 167, serine 198, serine 221 to histidine 223, and asparagine 297 contribute to the S-adenosyl-L-methionine site. Cysteine 340 functions as the S-methylcysteine intermediate in the catalytic mechanism.

Belongs to the radical SAM superfamily. RlmN family. The cofactor is [4Fe-4S] cluster.

Its subcellular location is the cytoplasm. It catalyses the reaction adenosine(2503) in 23S rRNA + 2 reduced [2Fe-2S]-[ferredoxin] + 2 S-adenosyl-L-methionine = 2-methyladenosine(2503) in 23S rRNA + 5'-deoxyadenosine + L-methionine + 2 oxidized [2Fe-2S]-[ferredoxin] + S-adenosyl-L-homocysteine. The catalysed reaction is adenosine(37) in tRNA + 2 reduced [2Fe-2S]-[ferredoxin] + 2 S-adenosyl-L-methionine = 2-methyladenosine(37) in tRNA + 5'-deoxyadenosine + L-methionine + 2 oxidized [2Fe-2S]-[ferredoxin] + S-adenosyl-L-homocysteine. Specifically methylates position 2 of adenine 2503 in 23S rRNA and position 2 of adenine 37 in tRNAs. m2A2503 modification seems to play a crucial role in the proofreading step occurring at the peptidyl transferase center and thus would serve to optimize ribosomal fidelity. The sequence is that of Dual-specificity RNA methyltransferase RlmN 1 from Myxococcus xanthus (strain DK1622).